The following is a 75-amino-acid chain: MRLVVCLVFLASFALVCQGQGYKGPYTRPILRPYVRPVVSYNACTLSCRGITTTQARSCSTRLGRCCHVAKGYSG.

Positions 1 to 19 (MRLVVCLVFLASFALVCQG) are cleaved as a signal peptide. Glutamine 20 carries the post-translational modification Pyrrolidone carboxylic acid. 2 disulfide bridges follow: cysteine 44-cysteine 59 and cysteine 48-cysteine 66. Serine 74 is modified (serine amide).

It belongs to the penaeidin family.

The protein resides in the cytoplasmic granule. Functionally, antibacterial and antifungal activity. Presents chitin-binding activity. This is Penaeidin-3n from Penaeus setiferus (Atlantic white shrimp).